Consider the following 325-residue polypeptide: Tagatose 1,6-diphosphate aldolase 1 (325 aa).

It belongs to the aldolase LacD family.

It catalyses the reaction D-tagatofuranose 1,6-bisphosphate = D-glyceraldehyde 3-phosphate + dihydroxyacetone phosphate. The protein operates within carbohydrate metabolism; D-tagatose 6-phosphate degradation; D-glyceraldehyde 3-phosphate and glycerone phosphate from D-tagatose 6-phosphate: step 2/2. In Streptococcus mutans serotype c (strain ATCC 700610 / UA159), this protein is Tagatose 1,6-diphosphate aldolase 1 (lacD1).